We begin with the raw amino-acid sequence, 876 residues long: Leucine--tRNA ligase (876 aa).

The short motif at 42–52 (PYPSGKLHMGH) is the 'HIGH' region element. Positions 634–638 (KMSKS) match the 'KMSKS' region motif. Lys-637 serves as a coordination point for ATP.

The protein belongs to the class-I aminoacyl-tRNA synthetase family.

The protein localises to the cytoplasm. It catalyses the reaction tRNA(Leu) + L-leucine + ATP = L-leucyl-tRNA(Leu) + AMP + diphosphate. In Neisseria meningitidis serogroup B (strain ATCC BAA-335 / MC58), this protein is Leucine--tRNA ligase.